Consider the following 363-residue polypeptide: NAD(P)H-quinone oxidoreductase subunit 1, chloroplastic (363 aa).

The next 6 membrane-spanning stretches (helical) occupy residues 30–50 (FLPI…IVWL), 104–124 (IAVI…HLVL), 129–149 (IGVF…LMSG), 248–268 (YSGI…LVSS), 300–320 (VFGT…FLFI), and 343–363 (FLLP…LLSL).

It belongs to the complex I subunit 1 family. In terms of assembly, NDH is composed of at least 16 different subunits, 5 of which are encoded in the nucleus.

It is found in the plastid. The protein resides in the chloroplast thylakoid membrane. It catalyses the reaction a plastoquinone + NADH + (n+1) H(+)(in) = a plastoquinol + NAD(+) + n H(+)(out). The catalysed reaction is a plastoquinone + NADPH + (n+1) H(+)(in) = a plastoquinol + NADP(+) + n H(+)(out). Its function is as follows. NDH shuttles electrons from NAD(P)H:plastoquinone, via FMN and iron-sulfur (Fe-S) centers, to quinones in the photosynthetic chain and possibly in a chloroplast respiratory chain. The immediate electron acceptor for the enzyme in this species is believed to be plastoquinone. Couples the redox reaction to proton translocation, and thus conserves the redox energy in a proton gradient. This is NAD(P)H-quinone oxidoreductase subunit 1, chloroplastic from Eucalyptus globulus subsp. globulus (Tasmanian blue gum).